Reading from the N-terminus, the 594-residue chain is UvrABC system protein C (594 aa).

A GIY-YIG domain is found at 14–91; it reads DQPGCYLMKD…IKKYDPKYNI (78 aa). A UVR domain is found at 196 to 231; that stretch reads KEVRSELEIKMYEASEKLEFERAKELRDQIAHIDAI.

Belongs to the UvrC family. In terms of assembly, interacts with UvrB in an incision complex.

The protein localises to the cytoplasm. Its function is as follows. The UvrABC repair system catalyzes the recognition and processing of DNA lesions. UvrC both incises the 5' and 3' sides of the lesion. The N-terminal half is responsible for the 3' incision and the C-terminal half is responsible for the 5' incision. The polypeptide is UvrABC system protein C (Bacillus cereus (strain G9842)).